The primary structure comprises 690 residues: CREB-H transcription factor homolog let-607 (690 aa).

Disordered regions lie at residues 87-118, 166-192, and 205-253; these read NDNC…SSGG, SAVH…SNGL, and PASI…KYPP. Composition is skewed to low complexity over residues 100–116, 170–181, and 213–236; these read SLPI…YHSS, QNQQQQQRRLNQ, and PSSS…SSST. Residues 284 to 347 form the bZIP domain; sequence DLKRIRRKIR…QSVISQLKKL (64 aa). The interval 286–321 is basic motif; it reads KRIRRKIRNKRSAQTSRKRKQDYIEQLEDRVSESTK. Residues 295 to 350 adopt a coiled-coil conformation; sequence KRSAQTSRKRKQDYIEQLEDRVSESTKENQALKQQIERLSSENQSVISQLKKLQAQ. A leucine-zipper region spans residues 326-333; it reads LKQQIERL. A compositionally biased stretch (polar residues) spans 451 to 464; it reads HNNSKYPASGNQNH. Disordered stretches follow at residues 451-495 and 509-536; these read HNNS…SMYR and GARK…ATSP. 2 stretches are compositionally biased toward low complexity: residues 480–492 and 514–535; these read QPKQ…HQPS and SSTS…SATS.

It belongs to the bZIP family.

The protein resides in the nucleus. Probable transcription factor, required during migration of the gonadal distal tip cells (DTC). Probably regulates cell adhesion of DTCs via modulation of expression of genes involved in integrin-mediated adhesion, including tln-1, src-1, and integrin pat-2. Modulates expression of genes involved in protein trafficking during embryogenesis, including emo-1, sec-61, calu-1, sec-24.1, enpl-1, sar-1 and tfg-1. This Caenorhabditis elegans protein is CREB-H transcription factor homolog let-607.